A 240-amino-acid polypeptide reads, in one-letter code: MADS-box transcription factor 27 (240 aa).

The MADS-box domain maps to 1 to 61 (MGRGKIVIRR…GRLYEYSSTS (61 aa)). One can recognise a K-box domain in the interval 86–176 (LKFWQREAAS…YKKISLIRQE (91 aa)). The span at 220–231 (LPQHSDAEQSTA) shows a compositional bias: polar residues. A disordered region spans residues 220–240 (LPQHSDAEQSTAPKLGLQLNP).

As to expression, ubiquitous.

It localises to the nucleus. Its function is as follows. Probable transcription factor. This chain is MADS-box transcription factor 27 (MADS27), found in Oryza sativa subsp. japonica (Rice).